The sequence spans 455 residues: Phosphoglucosamine mutase (455 aa).

Ser103 acts as the Phosphoserine intermediate in catalysis. Residues Ser103, Asp243, Asp245, and Asp247 each coordinate Mg(2+). Position 103 is a phosphoserine (Ser103).

The protein belongs to the phosphohexose mutase family. Mg(2+) serves as cofactor. Activated by phosphorylation.

The catalysed reaction is alpha-D-glucosamine 1-phosphate = D-glucosamine 6-phosphate. Functionally, catalyzes the conversion of glucosamine-6-phosphate to glucosamine-1-phosphate. The sequence is that of Phosphoglucosamine mutase from Halorhodospira halophila (strain DSM 244 / SL1) (Ectothiorhodospira halophila (strain DSM 244 / SL1)).